The following is a 70-amino-acid chain: Large ribosomal subunit protein bL31 (70 aa).

Residues Cys-16, Cys-18, Cys-37, and Cys-40 each contribute to the Zn(2+) site.

Belongs to the bacterial ribosomal protein bL31 family. Type A subfamily. As to quaternary structure, part of the 50S ribosomal subunit. Zn(2+) is required as a cofactor.

Its function is as follows. Binds the 23S rRNA. The polypeptide is Large ribosomal subunit protein bL31 (Shewanella denitrificans (strain OS217 / ATCC BAA-1090 / DSM 15013)).